The following is a 456-amino-acid chain: uncharacterized protein (456 aa).

The 59-residue stretch at 3 to 61 folds into the TRAM domain; that stretch reads TIKKNEVKTGKVIDLTHEGHGVVKVDRYPIFIPNALIDEEIKFKLIKVKKNFAIGKLIE. [4Fe-4S] cluster contacts are provided by Cys74, Cys80, Cys83, and Cys162. S-adenosyl-L-methionine-binding residues include Gln286, Tyr315, Glu336, and Asp384. Cys411 acts as the Nucleophile in catalysis.

Belongs to the class I-like SAM-binding methyltransferase superfamily. RNA M5U methyltransferase family.

This is an uncharacterized protein from Staphylococcus epidermidis (strain ATCC 35984 / DSM 28319 / BCRC 17069 / CCUG 31568 / BM 3577 / RP62A).